We begin with the raw amino-acid sequence, 1176 residues long: Serine/threonine-protein kinase pakF (1176 aa).

Composition is skewed to low complexity over residues 1–19 and 32–52; these read MSNL…ESSS and NLLN…SGSN. 2 disordered regions span residues 1–231 and 254–361; these read MSNL…HESR and LPST…KKTK. The segment covering 64 to 76 has biased composition (pro residues); that stretch reads QLPPNYTPPPPPH. Positions 92–133 form a coiled coil; sequence LNNENSDNNNNNNNNNNNNNNNNNNNNNNNNNNNEQLARTES. Composition is skewed to low complexity over residues 93 to 125, 133 to 148, and 156 to 172; these read NNEN…NNNN, SSVS…SNSG, and SSNI…ETYS. The segment covering 173 to 197 has biased composition (polar residues); the sequence is MSPNQTLNSNIDSSEQQHQDLSSSV. A compositionally biased stretch (low complexity) spans 198 to 226; sequence NNNNNNNNNNNNNNNNNNNNNNNNNNNNN. Residues 254–289 are compositionally biased toward polar residues; the sequence is LPSTPTQQNVEIQTTNGGSSETSPNGLISPRPSNDQ. Over residues 316-353 the composition is skewed to low complexity; that stretch reads SLSSSTTTPSTTSSLTSSPSSSSLAISSPNTTAATTTN. The 14-residue stretch at 370–383 folds into the CRIB domain; that stretch reads ISVPYNVIHKMHVD. A Protein kinase domain is found at 394–646; sequence FILDEKLGDG…PIDLLCHPFL (253 aa). ATP is bound by residues 400–408 and K423; that span reads LGDGAYGSV. D514 (proton acceptor) is an active-site residue. Disordered regions lie at residues 670–723, 753–885, 968–1083, and 1112–1176; these read IDDL…SDEL, QEEE…GNNL, HTTS…TGRA, and NSNS…NIKK. Composition is skewed to low complexity over residues 682 to 693 and 710 to 720; these read SQSSSSSSPQSP and SIISPIPSSPS. 2 stretches are compositionally biased toward acidic residues: residues 767 to 789 and 813 to 844; these read DEQD…EDVD and DQDD…DEEI. Residues 812–873 adopt a coiled-coil conformation; that stretch reads SDQDDEEEDE…NKKKNKKNNL (62 aa). The span at 852–870 shows a compositional bias: basic residues; that stretch reads VRKKKNKSTKKSNKKKNKK. Composition is skewed to polar residues over residues 873 to 884 and 968 to 985; these read LSTIGKSGSGNN and HTTS…ATNL. Composition is skewed to low complexity over residues 991-1044, 1051-1066, and 1148-1176; these read SSSP…RPNS, NNSS…SSSS, and SSGS…NIKK.

The protein belongs to the protein kinase superfamily. STE Ser/Thr protein kinase family. STE20 subfamily. Requires Mg(2+) as cofactor.

The enzyme catalyses L-seryl-[protein] + ATP = O-phospho-L-seryl-[protein] + ADP + H(+). The catalysed reaction is L-threonyl-[protein] + ATP = O-phospho-L-threonyl-[protein] + ADP + H(+). The polypeptide is Serine/threonine-protein kinase pakF (Dictyostelium discoideum (Social amoeba)).